The following is a 512-amino-acid chain: MHTPDFAGPDDARAVDIMDICESILERKRHDSERSTCSILEQTDMEAVEALVCMSSWGQRSQKGDLLRIRPLTPVSDSGDVTTTVHMDAATPELPKDFHSLSTLCITPPQSPDLVEPSTRTPVSPQVTDSKACTATDVLQSSAVVARALSGGAERGLLGLEPVPSSPCRAKGTSVIRHTGESPAACFPTIQTPDCRLSDSREGEEQLLGHFETLQDTHLTDSLLSTNLVSCQPCLHKSGGLLLTDKGQQAGWPGAVQTCSPKNYENDLPRKTTPLISVSVPAPPVLCQMIPVTGQSSMLPAFLKPPPQLSVGTVRPILAQAAPAPQPVFVGPAVPQGAVMLVLPQGALPPPAPCAANVMAAGNTKLLPLAPAPVFITSSQNCVPQVDFSRRRNYVCSFPGCRKTYFKSSHLKAHLRTHTGEKPFNCSWDGCDKKFARSDELSRHRRTHTGEKKFVCPVCDRRFMRSDHLTKHARRHMTTKKIPGWQAEVGKLNRIASAESPGSPLVSMPASA.

A disordered region spans residues 109-128 (PQSPDLVEPSTRTPVSPQVT). Over residues 118–128 (STRTPVSPQVT) the composition is skewed to polar residues. At serine 124 the chain carries Phosphoserine. 3 consecutive C2H2-type zinc fingers follow at residues 394–418 (YVCS…LRTH), 424–448 (FNCS…RRTH), and 454–476 (FVCP…ARRH).

The protein belongs to the Sp1 C2H2-type zinc-finger protein family. In terms of assembly, interacts with SIN3A. Ubiquitous. Higher expression in erythroid cells.

It localises to the nucleus. Its function is as follows. Transcription factor. Activates the epsilon- and gamma-globin gene promoters and, to a much lower degree, the beta-globin gene and represses promoters containing SP1-like binding inhibiting cell growth. Represses transcription of SMAD7 which enhances TGF-beta signaling. Induces apoptosis. The sequence is that of Krueppel-like factor 11 (KLF11) from Homo sapiens (Human).